The chain runs to 90 residues: Serine protease inhibitor Cvsi-1 (90 aa).

An N-terminal signal peptide occupies residues 1–19 (MDVVRTLILCVCLFGLTFA).

Post-translationally, contains 6 disulfide bonds. As to expression, detected in hemolymph (at protein level). In oysters collected in the summer the expression level is highest in the digestive gland with low levels of expression in gill, mantle, labial palp, style-sac midgut, gonad, heart, and hemocyte. In winter expression levels are higher in all tissues with highest expression levels observed in the digestive gland. Within the digestive gland expression is limited to the basophil cells of the digestive diverticula.

Its subcellular location is the secreted. In terms of biological role, slow-binding inhibitor of serine proteases. The inhibitor rapidly binds to the protease forming a weak enzyme-inhibitor complex, and this is followed by a slow isomerization forming a tight-binding enzyme-inhibitor complex. Active against subtilisin A, perkinsin and trypsin with dissociation constants of 0.29 nM, 13.7 nM and 17.7 nM respectively. Not active against thermolysin, papain or pepsin. Has antiparasitic activity against the protozoan P.marinus. In Crassostrea virginica (Eastern oyster), this protein is Serine protease inhibitor Cvsi-1.